The chain runs to 88 residues: uncharacterized protein (88 aa).

This is an uncharacterized protein from Bacillus subtilis (strain 168).